A 1028-amino-acid chain; its full sequence is Contactin-3 (1028 aa).

An N-terminal signal peptide occupies residues M1 to G19. 6 Ig-like C2-type domains span residues P26–Q117, E122–L208, P227–T313, P318–K402, P408–T497, and P499–I593. 5 disulfides stabilise this stretch: C50–C100, C144–C196, C249–C297, C339–C386, and C431–C479. 2 N-linked (GlcNAc...) asparagine glycosylation sites follow: N65 and N193. N-linked (GlcNAc...) asparagine glycans are attached at residues N377, N468, N489, and N538. An intrachain disulfide couples C521 to C577. 4 consecutive Fibronectin type-III domains span residues P600–A698, A703–E800, A805–T901, and P902–D998. The disordered stretch occupies residues G684–R714. 6 N-linked (GlcNAc...) asparagine glycosylation sites follow: N765, N860, N895, N913, N931, and N956. S1002 carries GPI-anchor amidated serine lipidation. The propeptide at T1003 to W1028 is removed in mature form.

Belongs to the immunoglobulin superfamily. Contactin family. As to quaternary structure, interacts with PTPRG. In terms of tissue distribution, specifically expressed in brain. Not expressed in peripheral tissues such as heart, lung, liver, spleen, kidney and skeletal muscle. In brain, it is restricted to subsets of neurons such as Purkinje cells of the cerebellum, granule cells of the dentate gyrus, and neurons in the superficial layers of the cerebral cortex.

It localises to the cell membrane. Contactins mediate cell surface interactions during nervous system development. Has some neurite outgrowth-promoting activity. This Rattus norvegicus (Rat) protein is Contactin-3 (Cntn3).